Here is a 128-residue protein sequence, read N- to C-terminus: Sulfurtransferase TusD (128 aa).

The Cysteine persulfide intermediate role is filled by Cys78.

This sequence belongs to the DsrE/TusD family. In terms of assembly, heterohexamer, formed by a dimer of trimers. The hexameric TusBCD complex contains 2 copies each of TusB, TusC and TusD. The TusBCD complex interacts with TusE.

Its subcellular location is the cytoplasm. Functionally, part of a sulfur-relay system required for 2-thiolation of 5-methylaminomethyl-2-thiouridine (mnm(5)s(2)U) at tRNA wobble positions. Accepts sulfur from TusA and transfers it in turn to TusE. The chain is Sulfurtransferase TusD from Shigella dysenteriae serotype 1 (strain Sd197).